The following is a 408-amino-acid chain: UPF0761 membrane protein azo3165 (408 aa).

Helical transmembrane passes span 29–49 (LAFTTLLALVPLLTVAIGVFG), 92–112 (LTLIGTAMLAVTALMLLATIE), 131–151 (ITVSWFMLTLGPVILGGSVVA), 172–192 (IAAATLPPLLLGALFSFLYYA), 197–217 (PVRLLHALAGGLCAALVFLLM), 220–240 (GLGLFIAGFPTYTLIYGTFAA), and 241–261 (LPIFLLWLYLSWTVILLGALI).

The protein belongs to the UPF0761 family.

It is found in the cell inner membrane. The polypeptide is UPF0761 membrane protein azo3165 (Azoarcus sp. (strain BH72)).